Consider the following 362-residue polypeptide: Sphingolipid delta(4)-desaturase (362 aa).

Residues 1-10 (MAESTATTTA) are compositionally biased toward low complexity. Positions 1–20 (MAESTATTTAVPPPAEESWN) are disordered. 3 helical membrane passes run 60–80 (PLTK…AYLL), 90–110 (FFLT…LAIH), and 121–143 (TLYN…AASF). A Histidine box-1 motif is present at residues 110 to 114 (HELSH). Residues 147–151 (HMEHH) carry the Histidine box-2 motif. The next 3 helical transmembrane spans lie at 169 to 189 (LILF…LLFY), 200 to 220 (PFTL…YLVV), and 228 to 248 (LAYF…AGHF). A Histidine box-3 motif is present at residues 290–294 (HIEHH).

This sequence belongs to the fatty acid desaturase type 1 family. DEGS subfamily.

Its subcellular location is the membrane. It carries out the reaction an N-acylsphinganine + 2 Fe(II)-[cytochrome b5] + O2 + 2 H(+) = an N-acylsphing-4-enine + 2 Fe(III)-[cytochrome b5] + 2 H2O. The protein operates within lipid metabolism; sphingolipid metabolism. Its function is as follows. Delta(4)-fatty-acid desaturase which introduces a double bond at the 4-position in the long-chain base (LCB) of ceramides. Required for sphingosine biosynthesis. The protein is Sphingolipid delta(4)-desaturase (dsd1) of Schizosaccharomyces pombe (strain 972 / ATCC 24843) (Fission yeast).